The chain runs to 260 residues: tRNA pseudouridine synthase C (260 aa).

D54 is a catalytic residue.

It belongs to the pseudouridine synthase RluA family.

It catalyses the reaction uridine(65) in tRNA = pseudouridine(65) in tRNA. Its function is as follows. Responsible for synthesis of pseudouridine from uracil-65 in transfer RNAs. The sequence is that of tRNA pseudouridine synthase C (truC) from Escherichia coli (strain K12).